The sequence spans 375 residues: Lipid-A-disaccharide synthase (375 aa).

The protein belongs to the LpxB family.

The enzyme catalyses a lipid X + a UDP-2-N,3-O-bis[(3R)-3-hydroxyacyl]-alpha-D-glucosamine = a lipid A disaccharide + UDP + H(+). It functions in the pathway bacterial outer membrane biogenesis; LPS lipid A biosynthesis. In terms of biological role, condensation of UDP-2,3-diacylglucosamine and 2,3-diacylglucosamine-1-phosphate to form lipid A disaccharide, a precursor of lipid A, a phosphorylated glycolipid that anchors the lipopolysaccharide to the outer membrane of the cell. In Pseudomonas entomophila (strain L48), this protein is Lipid-A-disaccharide synthase.